Here is a 380-residue protein sequence, read N- to C-terminus: Crotonobetainyl-CoA reductase (380 aa).

It belongs to the acyl-CoA dehydrogenase family. Homotetramer. FAD serves as cofactor.

The protein localises to the cytoplasm. It catalyses the reaction 4-(trimethylamino)butanoyl-CoA + oxidized [electron-transfer flavoprotein] + H(+) = crotonobetainyl-CoA + reduced [electron-transfer flavoprotein]. Its pathway is amine and polyamine metabolism; carnitine metabolism. Catalyzes the reduction of crotonobetainyl-CoA to gamma-butyrobetainyl-CoA. This Salmonella typhi protein is Crotonobetainyl-CoA reductase.